Consider the following 299-residue polypeptide: Phosphoribosylaminoimidazole-succinocarboxamide synthase (299 aa).

The protein belongs to the SAICAR synthetase family.

It catalyses the reaction 5-amino-1-(5-phospho-D-ribosyl)imidazole-4-carboxylate + L-aspartate + ATP = (2S)-2-[5-amino-1-(5-phospho-beta-D-ribosyl)imidazole-4-carboxamido]succinate + ADP + phosphate + 2 H(+). It functions in the pathway purine metabolism; IMP biosynthesis via de novo pathway; 5-amino-1-(5-phospho-D-ribosyl)imidazole-4-carboxamide from 5-amino-1-(5-phospho-D-ribosyl)imidazole-4-carboxylate: step 1/2. The protein is Phosphoribosylaminoimidazole-succinocarboxamide synthase (ade7) of Schizosaccharomyces pombe (strain 972 / ATCC 24843) (Fission yeast).